The primary structure comprises 226 residues: Regulator of microtubule dynamics protein 1 (226 aa).

Belongs to the FAM82/RMD family. In terms of assembly, interacts with air-2.

It localises to the cytoplasm. It is found in the cytoskeleton. Its subcellular location is the spindle pole. In terms of biological role, acts in chromosome segregation and organization during mitosis. In Caenorhabditis elegans, this protein is Regulator of microtubule dynamics protein 1 (rmd-1).